Reading from the N-terminus, the 347-residue chain is tRNA N6-adenosine threonylcarbamoyltransferase (347 aa).

Positions 117 and 121 each coordinate Fe cation. Residues 140 to 144, Asp173, Gly186, and Asn280 each bind substrate; that span reads LVSGG. Asp308 contributes to the Fe cation binding site.

This sequence belongs to the KAE1 / TsaD family. It depends on Fe(2+) as a cofactor.

Its subcellular location is the cytoplasm. The catalysed reaction is L-threonylcarbamoyladenylate + adenosine(37) in tRNA = N(6)-L-threonylcarbamoyladenosine(37) in tRNA + AMP + H(+). Functionally, required for the formation of a threonylcarbamoyl group on adenosine at position 37 (t(6)A37) in tRNAs that read codons beginning with adenine. Is involved in the transfer of the threonylcarbamoyl moiety of threonylcarbamoyl-AMP (TC-AMP) to the N6 group of A37, together with TsaE and TsaB. TsaD likely plays a direct catalytic role in this reaction. This chain is tRNA N6-adenosine threonylcarbamoyltransferase, found in Psychrobacter sp. (strain PRwf-1).